The chain runs to 334 residues: Glyceraldehyde-3-phosphate dehydrogenase (334 aa).

NAD(+) contacts are provided by residues 12-13 (RI), D35, R79, and S121. D-glyceraldehyde 3-phosphate contacts are provided by residues 152 to 154 (SCT), T183, R198, 211 to 212 (TG), and R234. Catalysis depends on C153, which acts as the Nucleophile. N315 lines the NAD(+) pocket.

Belongs to the glyceraldehyde-3-phosphate dehydrogenase family. Homotetramer.

It is found in the cytoplasm. It catalyses the reaction D-glyceraldehyde 3-phosphate + phosphate + NAD(+) = (2R)-3-phospho-glyceroyl phosphate + NADH + H(+). It participates in carbohydrate degradation; glycolysis; pyruvate from D-glyceraldehyde 3-phosphate: step 1/5. Catalyzes the oxidative phosphorylation of glyceraldehyde 3-phosphate (G3P) to 1,3-bisphosphoglycerate (BPG) using the cofactor NAD. The first reaction step involves the formation of a hemiacetal intermediate between G3P and a cysteine residue, and this hemiacetal intermediate is then oxidized to a thioester, with concomitant reduction of NAD to NADH. The reduced NADH is then exchanged with the second NAD, and the thioester is attacked by a nucleophilic inorganic phosphate to produce BPG. The polypeptide is Glyceraldehyde-3-phosphate dehydrogenase (gap) (Corynebacterium glutamicum (strain ATCC 13032 / DSM 20300 / JCM 1318 / BCRC 11384 / CCUG 27702 / LMG 3730 / NBRC 12168 / NCIMB 10025 / NRRL B-2784 / 534)).